Consider the following 256-residue polypeptide: 5-keto-4-deoxy-D-glucarate aldolase (256 aa).

The active-site Proton acceptor is H50. Position 151 (Q151) interacts with substrate. E153 provides a ligand contact to Mg(2+). Positions 178 and 179 each coordinate substrate. D179 lines the Mg(2+) pocket.

It belongs to the HpcH/HpaI aldolase family. KDGluc aldolase subfamily. Homohexamer; trimer of dimers. Requires Mg(2+) as cofactor.

The enzyme catalyses 5-dehydro-4-deoxy-D-glucarate = 2-hydroxy-3-oxopropanoate + pyruvate. The catalysed reaction is 2-dehydro-3-deoxy-D-glucarate = 2-hydroxy-3-oxopropanoate + pyruvate. It participates in carbohydrate acid metabolism; galactarate degradation; D-glycerate from galactarate: step 2/3. Catalyzes the reversible retro-aldol cleavage of both 5-keto-4-deoxy-D-glucarate and 2-keto-3-deoxy-D-glucarate to pyruvate and tartronic semialdehyde. In Salmonella gallinarum (strain 287/91 / NCTC 13346), this protein is 5-keto-4-deoxy-D-glucarate aldolase.